Consider the following 305-residue polypeptide: MNKTDKLLESLNVFIQKAEENQYKQLGEMVPDFPGKSNIPKYVEEYEKGIARLLRRQHKKFLDGLKGFVSKDSEETLKALLVFFTQNLFAEDDFEEEFQELTEGFLQQTIEEMAEVIMDSIDPEVPFKVLSNRTINWIKDWSKKLAEIMKLNTHEVVEDVLTNAIENGSSIQDIELTLKDMPQFDRERARTTAITEVLAASSAAQHESYAQSPAVKKKKWRHSGGKKNNPRENHIDLDGTVIGVDEEFQIPGSSETCMFPRDPKLSTRERVNCHCVLSPVVDSKILGLSPEEKEEIQREVLANME.

The interval 208–236 (SYAQSPAVKKKKWRHSGGKKNNPRENHID) is disordered. The span at 215–225 (VKKKKWRHSGG) shows a compositional bias: basic residues.

This is an uncharacterized protein from Bacillus subtilis (strain 168).